Here is a 1159-residue protein sequence, read N- to C-terminus: ATP-dependent helicase/deoxyribonuclease subunit B (1159 aa).

The UvrD-like helicase ATP-binding domain maps to 1 to 275 (MEFNTYIGRA…TYFNTFYRYN (275 aa)). Residue 8–15 (GRAGTGKS) coordinates ATP. The UvrD-like helicase C-terminal domain occupies 269–583 (NTFYRYNNDD…SIGTMDLAKV (315 aa)). [4Fe-4S] cluster-binding residues include cysteine 784, cysteine 1112, cysteine 1115, and cysteine 1121.

It belongs to the helicase family. AddB/RexB type 1 subfamily. In terms of assembly, heterodimer of AddA and AddB. Mg(2+) is required as a cofactor. [4Fe-4S] cluster serves as cofactor.

Its function is as follows. The heterodimer acts as both an ATP-dependent DNA helicase and an ATP-dependent, dual-direction single-stranded exonuclease. Recognizes the chi site generating a DNA molecule suitable for the initiation of homologous recombination. The AddB subunit has 5' -&gt; 3' nuclease activity but not helicase activity. This Staphylococcus epidermidis (strain ATCC 35984 / DSM 28319 / BCRC 17069 / CCUG 31568 / BM 3577 / RP62A) protein is ATP-dependent helicase/deoxyribonuclease subunit B.